We begin with the raw amino-acid sequence, 351 residues long: Putative [LysW]-L-2-aminoadipate/[LysW]-L-glutamate phosphate reductase (351 aa).

Residues 9–12 (SGFV) and 33–35 (SRR) contribute to the NADP(+) site. Cys150 is an active-site residue. Residue Asn318 coordinates NADP(+).

The protein belongs to the NAGSA dehydrogenase family. Type 1 subfamily. LysY sub-subfamily.

It is found in the cytoplasm. The enzyme catalyses [amino-group carrier protein]-C-terminal-N-(1-carboxy-5-oxopentan-1-yl)-L-glutamine + phosphate + NADP(+) = [amino-group carrier protein]-C-terminal-N-(1-carboxy-5-phosphooxy-5-oxopentan-1-yl)-L-glutamine + NADPH + H(+). The catalysed reaction is [amino-group carrier protein]-C-terminal-gamma-(L-glutamyl-5-semialdehyde)-L-glutamate + phosphate + NADP(+) = [amino-group carrier protein]-C-terminal-gamma-(5-phospho-L-glutamyl)-L-glutamate + NADPH + H(+). It functions in the pathway amino-acid biosynthesis; L-lysine biosynthesis via AAA pathway; L-lysine from L-alpha-aminoadipate (Thermus route): step 3/5. Its pathway is amino-acid biosynthesis; L-arginine biosynthesis. Functionally, involved in both the arginine and lysine biosynthetic pathways. The sequence is that of Putative [LysW]-L-2-aminoadipate/[LysW]-L-glutamate phosphate reductase from Pyrobaculum aerophilum (strain ATCC 51768 / DSM 7523 / JCM 9630 / CIP 104966 / NBRC 100827 / IM2).